Reading from the N-terminus, the 248-residue chain is Large ribosomal subunit protein uL30 (248 aa).

The disordered stretch occupies residues 22 to 42 (KSQEKARAERQAEIEKKKAAN). Basic and acidic residues predominate over residues 24–42 (QEKARAERQAEIEKKKAAN).

Belongs to the universal ribosomal protein uL30 family. In terms of assembly, component of the large ribosomal subunit (LSU). Mature N.crassa ribosomes consist of a small (40S) and a large (60S) subunit. The 40S small subunit contains 1 molecule of ribosomal RNA (18S rRNA) and at least 32 different proteins. The large 60S subunit contains 3 rRNA molecules (26S, 5.8S and 5S rRNA) and at least 42 different proteins.

It localises to the cytoplasm. In terms of biological role, component of the ribosome, a large ribonucleoprotein complex responsible for the synthesis of proteins in the cell. The small ribosomal subunit (SSU) binds messenger RNAs (mRNAs) and translates the encoded message by selecting cognate aminoacyl-transfer RNA (tRNA) molecules. The large subunit (LSU) contains the ribosomal catalytic site termed the peptidyl transferase center (PTC), which catalyzes the formation of peptide bonds, thereby polymerizing the amino acids delivered by tRNAs into a polypeptide chain. The nascent polypeptides leave the ribosome through a tunnel in the LSU and interact with protein factors that function in enzymatic processing, targeting, and the membrane insertion of nascent chains at the exit of the ribosomal tunnel. The sequence is that of Large ribosomal subunit protein uL30 (rpl-7) from Neurospora crassa (strain ATCC 24698 / 74-OR23-1A / CBS 708.71 / DSM 1257 / FGSC 987).